We begin with the raw amino-acid sequence, 167 residues long: Cell division protein SepF (167 aa).

Positions 25–64 (EEDVAPVNNSTFQEKKHKKRSAVQRKQKNSDQEGDSVVPL) are disordered. The segment covering 39–51 (KKHKKRSAVQRKQ) has biased composition (basic residues).

It belongs to the SepF family. In terms of assembly, homodimer. Interacts with FtsZ.

The protein localises to the cytoplasm. Its function is as follows. Cell division protein that is part of the divisome complex and is recruited early to the Z-ring. Probably stimulates Z-ring formation, perhaps through the cross-linking of FtsZ protofilaments. Its function overlaps with FtsA. In Natranaerobius thermophilus (strain ATCC BAA-1301 / DSM 18059 / JW/NM-WN-LF), this protein is Cell division protein SepF.